The sequence spans 153 residues: Histone H2B.6 (153 aa).

2 stretches are compositionally biased toward basic and acidic residues: residues 1–28 (MAPK…EKAP) and 36–53 (EKRL…EGKK). The disordered stretch occupies residues 1-60 (MAPKAEKKPAAKKPAEEEPAAEKAEKAPAGKKPKAEKRLPAGKGEKGSGEGKKAGRKKGK). Residues K7 and K37 each carry the N6-acetyllysine modification. K149 participates in a covalent cross-link: Glycyl lysine isopeptide (Lys-Gly) (interchain with G-Cter in ubiquitin).

Belongs to the histone H2B family. The nucleosome is a histone octamer containing two molecules each of H2A, H2B, H3 and H4 assembled in one H3-H4 heterotetramer and two H2A-H2B heterodimers. The octamer wraps approximately 147 bp of DNA. Post-translationally, can be acetylated to form H2BK6ac and H2BK33ac. In terms of processing, monoubiquitinated by BRE1 to form H2BK143ub1 and deubiquitinated by UBP26. Required for heterochromatic histone H3 di- and trimethylation at H3K4me. May give a specific tag for epigenetic transcriptional activation.

It is found in the nucleus. It localises to the chromosome. In terms of biological role, core component of nucleosome. Nucleosomes wrap and compact DNA into chromatin, limiting DNA accessibility to the cellular machineries which require DNA as a template. Histones thereby play a central role in transcription regulation, DNA repair, DNA replication and chromosomal stability. DNA accessibility is regulated via a complex set of post-translational modifications of histones, also called histone code, and nucleosome remodeling. The polypeptide is Histone H2B.6 (H2B.6) (Oryza sativa subsp. japonica (Rice)).